Reading from the N-terminus, the 290-residue chain is Cbb3-type cytochrome c oxidase subunit FixP (290 aa).

Residues 33 to 53 (WWVITFYITIVWAIGYWIVYP) traverse the membrane as a helical segment. 2 Cytochrome c domains span residues 109–198 (LARA…RSLS) and 206–287 (YDAA…HSLG). Residues C122, C125, H126, M173, C219, C222, H223, and M264 each coordinate heme c.

The protein belongs to the CcoP / FixP family. As to quaternary structure, component of the cbb3-type cytochrome c oxidase at least composed of FixN, FixO, FixQ and FixP. Requires heme c as cofactor.

The protein resides in the cell inner membrane. It functions in the pathway energy metabolism; oxidative phosphorylation. Functionally, C-type cytochrome. Part of the cbb3-type cytochrome c oxidase complex. FixP subunit is required for transferring electrons from donor cytochrome c via its heme groups to FixO subunit. From there, electrons are shuttled to the catalytic binuclear center of FixN subunit where oxygen reduction takes place. The complex also functions as a proton pump. This chain is Cbb3-type cytochrome c oxidase subunit FixP, found in Bradyrhizobium sp. (strain ORS 278).